A 152-amino-acid polypeptide reads, in one-letter code: Large ribosomal subunit protein bL9 (152 aa).

It belongs to the bacterial ribosomal protein bL9 family.

In terms of biological role, binds to the 23S rRNA. The protein is Large ribosomal subunit protein bL9 of Mycobacterium ulcerans (strain Agy99).